We begin with the raw amino-acid sequence, 404 residues long: Zinc metalloprotease Rip1 (404 aa).

The helical transmembrane segment at 1 to 21 threads the bilayer; the sequence is MMFVTGIVLFALAILISVALH. His-21 contacts Zn(2+). Glu-22 is an active-site residue. His-25 contributes to the Zn(2+) binding site. The chain crosses the membrane as a helical span at residues 104-124; it reads PGMNLAICLVLIYAIALVWGL. Positions 121–203 constitute a PDZ domain; that stretch reads VWGLPNLHPP…SVPIVVERDG (83 aa). Asp-202 serves as a coordination point for Zn(2+). The next 2 membrane-spanning stretches (helical) occupy residues 313 to 333 and 373 to 393; these read LWVA…AINL and LLPA…LTVT.

It belongs to the peptidase M50B family. Requires Zn(2+) as cofactor.

The protein resides in the cell membrane. Functionally, a probable site-2 protease (S2P) that cleaves type-2 transmembrane proteins within their membrane-spanning domains. Degrades anti-sigma factors RskA, RslA and RsmA, releasing sigma factors SigK, SigL and SigM from the cellular membrane, activating signaling pathways. Does not act on RsdA. Regulates the composition of extractable mycolic acids in the cell envelope in response to changes in membrane fluidity. Mediates transcriptional regulation of mycolic acid biosynthetic genes in response to detergent. Probably also cleaves PbpB (PBP3, FtsI); this cleavage is inhibited by Wag31-PbpBI interaction. Its function is as follows. Regulated intramembrane proteolysis (RIP) occurs when an extracytoplasmic signal (possibly oxidative stress) triggers a concerted proteolytic cascade to transmit information and elicit cellular responses. The membrane-spanning regulatory substrate protein (includes anti-sigma factors RskA, RslA, RsmA, and PbpB) is first cut extracytoplasmically (site-1 protease, S1P), then within the membrane itself (site-2 protease, S2P, this entry), while cytoplasmic proteases finish degrading the regulatory protein, liberating the effector protein (ECF sigma factors SigK, SigL and SigM). This Mycobacterium tuberculosis (strain ATCC 35801 / TMC 107 / Erdman) protein is Zinc metalloprotease Rip1 (rip1).